Consider the following 293-residue polypeptide: 4-hydroxy-tetrahydrodipicolinate synthase (293 aa).

A pyruvate-binding site is contributed by T45. Residue Y133 is the Proton donor/acceptor of the active site. The active-site Schiff-base intermediate with substrate is K161. I203 provides a ligand contact to pyruvate.

This sequence belongs to the DapA family. As to quaternary structure, homotetramer; dimer of dimers.

It localises to the cytoplasm. It catalyses the reaction L-aspartate 4-semialdehyde + pyruvate = (2S,4S)-4-hydroxy-2,3,4,5-tetrahydrodipicolinate + H2O + H(+). It participates in amino-acid biosynthesis; L-lysine biosynthesis via DAP pathway; (S)-tetrahydrodipicolinate from L-aspartate: step 3/4. In terms of biological role, catalyzes the condensation of (S)-aspartate-beta-semialdehyde [(S)-ASA] and pyruvate to 4-hydroxy-tetrahydrodipicolinate (HTPA). The protein is 4-hydroxy-tetrahydrodipicolinate synthase of Shewanella denitrificans (strain OS217 / ATCC BAA-1090 / DSM 15013).